A 377-amino-acid chain; its full sequence is Malate dehydrogenase, cytoplasmic (377 aa).

A Pro/N-degron motif is present at residues 2 to 5 (PHSV). T6 is subject to Phosphothreonine. Residues 20 to 26 (GAAGGIG) and D57 contribute to the NAD(+) site. Substrate-binding residues include R106 and R112. NAD(+) contacts are provided by residues N119 and 144-146 (ISN). Substrate is bound by residues N146 and R185. The active-site Proton acceptor is the H215. M266 contacts NAD(+).

It belongs to the LDH/MDH superfamily. MDH type 1 family. Homodimer. Targeted for proteasomal degradation when cells are shifted to glucose-containing growth medium.

The protein localises to the cytoplasm. It catalyses the reaction (S)-malate + NAD(+) = oxaloacetate + NADH + H(+). In terms of biological role, the isoenzyme MDH2 may function primarily in the glyoxylate cycle. This Saccharomyces cerevisiae (strain ATCC 204508 / S288c) (Baker's yeast) protein is Malate dehydrogenase, cytoplasmic (MDH2).